Here is a 74-residue protein sequence, read N- to C-terminus: Cytochrome c oxidase subunit 3 (74 aa).

The next 2 helical transmembrane spans lie at 15–37 (SPWP…KWFH) and 42–59 (SLFL…YQWW).

It belongs to the cytochrome c oxidase subunit 3 family. As to quaternary structure, component of the cytochrome c oxidase (complex IV, CIV), a multisubunit enzyme composed of a catalytic core of 3 subunits and several supernumerary subunits. The complex exists as a monomer or a dimer and forms supercomplexes (SCs) in the inner mitochondrial membrane with ubiquinol-cytochrome c oxidoreductase (cytochrome b-c1 complex, complex III, CIII).

Its subcellular location is the mitochondrion inner membrane. The catalysed reaction is 4 Fe(II)-[cytochrome c] + O2 + 8 H(+)(in) = 4 Fe(III)-[cytochrome c] + 2 H2O + 4 H(+)(out). Functionally, component of the cytochrome c oxidase, the last enzyme in the mitochondrial electron transport chain which drives oxidative phosphorylation. The respiratory chain contains 3 multisubunit complexes succinate dehydrogenase (complex II, CII), ubiquinol-cytochrome c oxidoreductase (cytochrome b-c1 complex, complex III, CIII) and cytochrome c oxidase (complex IV, CIV), that cooperate to transfer electrons derived from NADH and succinate to molecular oxygen, creating an electrochemical gradient over the inner membrane that drives transmembrane transport and the ATP synthase. Cytochrome c oxidase is the component of the respiratory chain that catalyzes the reduction of oxygen to water. Electrons originating from reduced cytochrome c in the intermembrane space (IMS) are transferred via the dinuclear copper A center (CU(A)) of subunit 2 and heme A of subunit 1 to the active site in subunit 1, a binuclear center (BNC) formed by heme A3 and copper B (CU(B)). The BNC reduces molecular oxygen to 2 water molecules using 4 electrons from cytochrome c in the IMS and 4 protons from the mitochondrial matrix. This is Cytochrome c oxidase subunit 3 (mt:CoIII) from Drosophila simulans (Fruit fly).